A 380-amino-acid polypeptide reads, in one-letter code: MNFELTKEQQMVREMVKDFAKKEIAPHAEHVDQTGEFPMQTFKKMGELGLMGIPFPEEYGGSGGDTISYALAVEEVGKACGSTGLSYAAAVSLGASPLYYFGTEEQKQTHLTPLASGTALGSFGLTEPNAGSDAGGTQTKAISNGDEYVINGEKCWITNASYARTVIVTAVTGKNKDGKNIISALIVPTDTPGLTITSPYDKMGVRGSNTAEILLEDVRVPAANLLGDPTKGFKQFLYTLDGGRISIAALAVGIAQAALDASLAYAKERKQFGQPISSFQAIQFKLADMAMEIDLARQMVLKAAWLKDHNRPFTKEAAYAKLFASEMATRACNQAIQIHGGSGYMKEYGVERMLRDAKLMEIGEGTSEIQRLVIARQLLK.

FAD contacts are provided by residues 123-132 (FGLTEPNAGS), 156-158 (WIT), Arg-269, and 337-341 (QIHGG). Glu-364 serves as the catalytic Proton acceptor. An FAD-binding site is contributed by 366–368 (TSE).

The protein belongs to the acyl-CoA dehydrogenase family. FAD is required as a cofactor.

The catalysed reaction is a 2,3-saturated acyl-CoA + A = a 2,3-dehydroacyl-CoA + AH2. In Bacillus subtilis (strain 168), this protein is Probable acyl-CoA dehydrogenase YngJ (yngJ).